The sequence spans 434 residues: Serine--tRNA ligase (434 aa).

An L-serine-binding site is contributed by 237–239; that stretch reads TAE. 268–270 is an ATP binding site; sequence RAE. Residue E291 coordinates L-serine. 358–361 serves as a coordination point for ATP; it reads EISS. Residue S393 participates in L-serine binding.

The protein belongs to the class-II aminoacyl-tRNA synthetase family. Type-1 seryl-tRNA synthetase subfamily. As to quaternary structure, homodimer. The tRNA molecule binds across the dimer.

Its subcellular location is the cytoplasm. The enzyme catalyses tRNA(Ser) + L-serine + ATP = L-seryl-tRNA(Ser) + AMP + diphosphate + H(+). It carries out the reaction tRNA(Sec) + L-serine + ATP = L-seryl-tRNA(Sec) + AMP + diphosphate + H(+). It participates in aminoacyl-tRNA biosynthesis; selenocysteinyl-tRNA(Sec) biosynthesis; L-seryl-tRNA(Sec) from L-serine and tRNA(Sec): step 1/1. Functionally, catalyzes the attachment of serine to tRNA(Ser). Is also able to aminoacylate tRNA(Sec) with serine, to form the misacylated tRNA L-seryl-tRNA(Sec), which will be further converted into selenocysteinyl-tRNA(Sec). The protein is Serine--tRNA ligase of Rhodopseudomonas palustris (strain ATCC BAA-98 / CGA009).